We begin with the raw amino-acid sequence, 243 residues long: Asnovolin H synthase nvfL (243 aa).

7 helical membrane passes run 20 to 42, 51 to 71, 75 to 95, 112 to 132, 138 to 160, 169 to 189, and 205 to 225; these read ANTLRIMCAISWNISYMSMAYYS, ALIPLCNNIAWEFVYSFIHCP, FVRIENTGWFLLNIVVMYAAI, LPFIFAVGISAMIAGHLALAA, IAFVWSAKGCQLVLSTGALSQLL, SYVVWLSRYLGTVFIDVMVTI, and LLLWFMAVFHLLDWTYGFCFY.

Belongs to the paxB family.

Its subcellular location is the membrane. The catalysed reaction is (3R)-[(10S)-11-epoxyfarnesyl]-2,3,5-trimethyl-6-oxido-4-oxocyclohexa-1,5-diene-1-carboxylate + H(+) = asnovolin H. Its pathway is secondary metabolite biosynthesis; terpenoid biosynthesis. In terms of biological role, terpene cyclase; part of the gene cluster that mediates the biosynthesis of novofumigatonin, a heavily oxygenated meroterpenoid containing a unique orthoester moiety. The first step of the pathway is the synthesis of 3,5-dimethylorsellinic acid (DMOA) by the polyketide synthase nvfA via condensation of one acetyl-CoA starter unit with 3 malonyl-CoA units and 2 methylations. DMOA is then converted to farnesyl-DMOA by the farnesyltransferase nvfB. Epoxydation by FAD-dependent monooxygenase nvfK, followed by a protonation-initiated cyclization catalyzed by the terpene cyclase nvfL leads to the production of asnavolin H. The short chain dehydrogenase nvfC then as a 3-OH dehydrogenase of asnovolin H to yield chemesin D. There are two branches to synthesize asnovolin A from chemesin D. In one branch, chemesin D undergoes Baeyer-Villiger oxidation by nvfH, methylation by nvfJ, and enoyl reduction by the nvfM D enoylreductase that reduces the double bond between C-5'and C-6', to form respectively asnovolin I, asnovolin K, and asnovolin A. In the other branch, the methylation precedes the Baeyer-Villiger oxidation and the enoyl reduction to yield asnovolin A via the asnovolin J intermediate. Asnovolin A is further converted to fumigatonoid A by the Fe(II)/2-oxoglutarate-dependent dioxygenase nvfI that catalyzes an endoperoxidation reaction. The alpha/beta hydrolase nvfD then acts as an epimerase that converts fumigatonoid A to its C-5' epimer, which then undergoes spontaneous or nvfD-catalyzed lactonization. The following step utilizes the ketoreductase nvfG to produce fumigatonoid B. The dioxygenase nvfE further converts fumigatonoid B into fumigatonoid C. Finally the Fe(II)/2-oxoglutarate-dependent dioxygenase nvfF catalyzes two rounds of oxidation to transform fumigatonoid C into the end product, novofumigatonin A. This is Asnovolin H synthase nvfL from Aspergillus novofumigatus (strain IBT 16806).